We begin with the raw amino-acid sequence, 120 residues long: Large ribosomal subunit protein uL22 (120 aa).

Belongs to the universal ribosomal protein uL22 family. Part of the 50S ribosomal subunit.

Its function is as follows. This protein binds specifically to 23S rRNA; its binding is stimulated by other ribosomal proteins, e.g. L4, L17, and L20. It is important during the early stages of 50S assembly. It makes multiple contacts with different domains of the 23S rRNA in the assembled 50S subunit and ribosome. The globular domain of the protein is located near the polypeptide exit tunnel on the outside of the subunit, while an extended beta-hairpin is found that lines the wall of the exit tunnel in the center of the 70S ribosome. The protein is Large ribosomal subunit protein uL22 of Corynebacterium glutamicum (strain R).